The primary structure comprises 188 residues: dCTP deaminase (188 aa).

Residues 111–116, 135–137, Gln156, Tyr170, and Gln180 each bind dCTP; these read KSTYAR and TLE. Catalysis depends on Glu137, which acts as the Proton donor/acceptor.

This sequence belongs to the dCTP deaminase family. As to quaternary structure, homotrimer.

It catalyses the reaction dCTP + H2O + H(+) = dUTP + NH4(+). Its pathway is pyrimidine metabolism; dUMP biosynthesis; dUMP from dCTP (dUTP route): step 1/2. Its function is as follows. Catalyzes the deamination of dCTP to dUTP. In Polaromonas sp. (strain JS666 / ATCC BAA-500), this protein is dCTP deaminase.